The following is a 280-amino-acid chain: Delta(3,5)-Delta(2,4)-dienoyl-CoA isomerase (280 aa).

Residue E154 is the Proton donor/acceptor of the active site. The Peroxisome targeting signal (PTS1) motif lies at 278-280 (HKL).

This sequence belongs to the enoyl-CoA hydratase/isomerase family.

The protein resides in the cytoplasm. It localises to the cytosol. The protein localises to the peroxisome. It catalyses the reaction a (3E,5Z)-dienoyl-CoA = a (2E,4E)-(5,6-saturated)-dienoyl-CoA. It functions in the pathway lipid metabolism; fatty acid beta-oxidation. In terms of biological role, peroxisomal di-isomerase that is involved in fatty acid metabolism enzyme by converting 3,5-dienoyl-CoAs to the corresponding 2,4-dienoyl-CoAs. Involved in fatty acid beta-oxidation, which is important for lipid droplets degradation and infectious growth. This chain is Delta(3,5)-Delta(2,4)-dienoyl-CoA isomerase, found in Pyricularia oryzae (strain 70-15 / ATCC MYA-4617 / FGSC 8958) (Rice blast fungus).